The primary structure comprises 251 residues: NADPH-dependent oxidoreductase (251 aa).

The protein belongs to the flavin oxidoreductase frp family. FMN is required as a cofactor.

Its function is as follows. Reduces FMN, organic nitro compounds and disulfide DTNB. Involved in maintenance of the cellular redox state and the disulfide stress response. This Staphylococcus haemolyticus (strain JCSC1435) protein is NADPH-dependent oxidoreductase (nfrA).